Consider the following 501-residue polypeptide: Zinc finger protein 704 (501 aa).

Polar residues predominate over residues 80–96; it reads SLKSTCNGGQRDGLTQG. Disordered regions lie at residues 80–138, 183–203, and 216–267; these read SLKS…HTRS, PLVR…WKDG, and WSWS…LFDE. Residues 115–137 are compositionally biased toward basic and acidic residues; the sequence is EEPRVLEHKRTGRALETEKDHTR. Residues 281-306 form a C2H2-type zinc finger; that stretch reads FKCLWKNCGKVLSTAAGIQRHIRTVH. Disordered regions lie at residues 340–380, 398–419, 427–446, and 453–472; these read SLSP…SRSA, PVTI…FSIS, FTGT…GEQH, and LSSP…GEGK. Residues 368 to 380 show a composition bias toward low complexity; sequence SESSSSTPLSRSA. The CR1 signature appears at 472-476; the sequence is KKCRK. The CR2 motif lies at 490–494; sequence CRWKK.

It localises to the nucleus. Transcription factor. The chain is Zinc finger protein 704 (znf704) from Danio rerio (Zebrafish).